The chain runs to 114 residues: Large ribosomal subunit protein bL19 (114 aa).

It belongs to the bacterial ribosomal protein bL19 family.

In terms of biological role, this protein is located at the 30S-50S ribosomal subunit interface and may play a role in the structure and function of the aminoacyl-tRNA binding site. The sequence is that of Large ribosomal subunit protein bL19 from Bacillus mycoides (strain KBAB4) (Bacillus weihenstephanensis).